A 239-amino-acid polypeptide reads, in one-letter code: tRNA (guanine-N(7)-)-methyltransferase (239 aa).

4 residues coordinate S-adenosyl-L-methionine: Glu-69, Glu-94, Asp-121, and Asp-144. Asp-144 is an active-site residue. Residue Lys-148 coordinates substrate. An interaction with RNA region spans residues 150–155 (RHNKRR). Residues Asp-180 and 217–220 (TKFE) each bind substrate.

This sequence belongs to the class I-like SAM-binding methyltransferase superfamily. TrmB family. Monomer.

The catalysed reaction is guanosine(46) in tRNA + S-adenosyl-L-methionine = N(7)-methylguanosine(46) in tRNA + S-adenosyl-L-homocysteine. The protein operates within tRNA modification; N(7)-methylguanine-tRNA biosynthesis. Catalyzes the formation of N(7)-methylguanine at position 46 (m7G46) in tRNA. The polypeptide is tRNA (guanine-N(7)-)-methyltransferase (Salmonella typhi).